The following is a 385-amino-acid chain: Trans-enoyl reductase tasC (385 aa).

49–52 is an NADP(+) binding site; sequence VDTK. A substrate-binding site is contributed by 136–143; sequence NSWYTVAW. Residues 196-199, 219-222, and 284-285 each bind NADP(+); these read SSST, SARN, and LD. Residue 305–309 participates in substrate binding; that stretch reads GPELM. 374-375 contacts NADP(+); the sequence is VS.

The protein belongs to the zinc-containing alcohol dehydrogenase family. As to quaternary structure, monomer.

It carries out the reaction (2S,4S)-4-hydroxy-4-methylglutamate + 8 malonyl-CoA + 3 S-adenosyl-L-methionine + ATP + 8 NADPH + 11 H(+) = (2S)-3-[(2S)-3,5-dioxo-4-[(2E,4R,6R,8E,10E,12E)-4,6,12-trimethyltetradeca-2,8,10,12-tetraenoyl]pyrrolidin-2-yl]-2-hydroxy-2-methylpropanoate + AMP + 3 S-adenosyl-L-homocysteine + 8 CO2 + diphosphate + 8 NADP(+) + 8 CoA + 6 H2O. The enzyme catalyses (2S,4R)-4-hydroxy-4-methylglutamate + 8 malonyl-CoA + 3 S-adenosyl-L-methionine + ATP + 8 NADPH + 11 H(+) = (2R)-3-[(2S)-3,5-dioxo-4-[(2E,4R,6R,8E,10E,12E)-4,6,12-trimethyltetradeca-2,8,10,12-tetraenoyl]pyrrolidin-2-yl]-2-hydroxy-2-methylpropanoate + AMP + 3 S-adenosyl-L-homocysteine + 8 CO2 + diphosphate + 8 NADP(+) + 8 CoA + 6 H2O. It participates in secondary metabolite biosynthesis. In terms of biological role, trans-enoyl reductase; part of the gene cluster that mediates the biosynthesis of the tetramic acids Sch210971 and Sch210972, potential anti-HIV fungal natural product that contain a decalin core. The PKS module of tasS together with the enoylreductase tasC catalyze the formation of the polyketide unit which is then conjugated to 4-hydroxyl-4-methyl glutamate (HMG) by the condensation domain of the tasS NRPS module. One unique structural feature of Sch210971 and Sch210972 is the tetramic acid motif proposed to be derived from the non-proteinogenic amino acid HMG, by a Dieckmann-type condensation catalyzed by the reductase domain of tasS. The aldolase tasA catalyzes the aldol condensation of 2 molecules of pyruvic acid to yield the intermediate 4-hydroxyl-4-methyl-2-oxoglutarate (HMOG), which can then be stereoselectively transaminated, may be by tasG, to form HMG. The Diels-Alderase tas3 then uses the Dieckmann product of tasS as substrate and catalyzes the Diels-Alder cycloaddition to form the decalin ring of Sch210971 and Sch210972. This chain is Trans-enoyl reductase tasC, found in Hapsidospora irregularis.